A 260-amino-acid chain; its full sequence is Putative imidazole glycerol phosphate synthase subunit hisF3 (260 aa).

The active site involves Asp-135.

This sequence belongs to the HisA/HisF family. Heterodimer of HisH and HisF.

The protein localises to the cytoplasm. It carries out the reaction 5-[(5-phospho-1-deoxy-D-ribulos-1-ylimino)methylamino]-1-(5-phospho-beta-D-ribosyl)imidazole-4-carboxamide + L-glutamine = D-erythro-1-(imidazol-4-yl)glycerol 3-phosphate + 5-amino-1-(5-phospho-beta-D-ribosyl)imidazole-4-carboxamide + L-glutamate + H(+). The protein operates within amino-acid biosynthesis; L-histidine biosynthesis; L-histidine from 5-phospho-alpha-D-ribose 1-diphosphate: step 5/9. In terms of biological role, IGPS catalyzes the conversion of PRFAR and glutamine to IGP, AICAR and glutamate. The HisF subunit catalyzes the cyclization activity that produces IGP and AICAR from PRFAR using the ammonia provided by the HisH subunit. This chain is Putative imidazole glycerol phosphate synthase subunit hisF3 (hisF3), found in Vibrio vulnificus (strain YJ016).